A 77-amino-acid polypeptide reads, in one-letter code: Large ribosomal subunit protein bL28 (77 aa).

It belongs to the bacterial ribosomal protein bL28 family.

In Laribacter hongkongensis (strain HLHK9), this protein is Large ribosomal subunit protein bL28.